A 440-amino-acid chain; its full sequence is Aclacinomycin-T 2-deoxy-L-fucose transferase (440 aa).

It catalyses the reaction dTDP-2-deoxy-beta-L-fucose + aclacinomycin T = aclacinomycin S + dTDP + H(+). Functionally, involved in the biosynthesis of the trisaccharide moiety characteristic of the antitumor drug aclacinomycins. In the first reaction, AknK catalyzes the transfer of 2-deoxy-beta-L-fucose from the activated donor dTDP-2-deoxy-beta-L-fucose to the mono-glycosylated aclacinomycin T (rhodosaminyl aklavinone), forming the di-glycosylated aclacinomycin S (L-2-deoxyfucosyl-L-rhodosaminyl aklavinone). It can also catalyze the addition of an alternate dTDP-L-sugar, dTDP-L-daunosamine, to aclacinomycin T and the addition of 2-deoxy-beta-L-fucose to the mono-glycosylated aglycones (monoglycosylated anthracyclines) such as daunomycin (daunorubicin), adriamycin (doxorubicin) and idarubicin. In vitro, AknK also catalyzes the addition of a second L-2-deoxyfucosyl moiety from dTDP-2-deoxy-beta-L-fucose, albeit with reduced activity, to the natural disaccharide chain of aclacinomycin S to produce L-deoxyfucosyl-L-deoxyfucosyl-L-rhodosaminyl aklavinone (2-deoxy-alpha-D-fucosyl-aclacinomycin S), a variant of the natural aclacinomycin A. In Streptomyces galilaeus, this protein is Aclacinomycin-T 2-deoxy-L-fucose transferase.